The sequence spans 289 residues: 4-diphosphocytidyl-2-C-methyl-D-erythritol kinase (289 aa).

Residue Lys-10 is part of the active site. ATP is bound at residue 99-109 (PMGGGLGGGSS). Residue Asp-141 is part of the active site.

This sequence belongs to the GHMP kinase family. IspE subfamily. Homodimer.

It catalyses the reaction 4-CDP-2-C-methyl-D-erythritol + ATP = 4-CDP-2-C-methyl-D-erythritol 2-phosphate + ADP + H(+). It participates in isoprenoid biosynthesis; isopentenyl diphosphate biosynthesis via DXP pathway; isopentenyl diphosphate from 1-deoxy-D-xylulose 5-phosphate: step 3/6. In terms of biological role, catalyzes the phosphorylation of the position 2 hydroxy group of 4-diphosphocytidyl-2C-methyl-D-erythritol. This Enterobacter sp. (strain 638) protein is 4-diphosphocytidyl-2-C-methyl-D-erythritol kinase.